The primary structure comprises 365 residues: MTRLTLALDVMGGDFGPSVTVPAALQALNSNSQLTLLLVGDPDAITPLLAKADFEQRSRLQIIPAQSVIASDARPAQAIRSSRGSSMRVALELVKEGRAQACVSAGNTGALMGLAKLLLKPIEGIERPALVTVLPHQQKGKTVVLDLGANVDCDSTMLVQFAVMGAVLAEEVVGIANPRVALLNIGEEEMKGLGSIRDAAAVLKTLPSLNYIGYLEANELLTGKTDVLVCDGFTGNVTLKTMEGVVRMFLSLLKSQGEGKKRSWWLLLLKRWLQKSLARRFSHLNPDQYNGACLLGLRGSVIKSHGAANQRAFSVAIEQAVQAVQRQIPQRIAARLESLYPAGFELPESDSDVNARQQSGTNGHD.

This sequence belongs to the PlsX family. Homodimer. Probably interacts with PlsY.

It is found in the cytoplasm. The enzyme catalyses a fatty acyl-[ACP] + phosphate = an acyl phosphate + holo-[ACP]. Its pathway is lipid metabolism; phospholipid metabolism. In terms of biological role, catalyzes the reversible formation of acyl-phosphate (acyl-PO(4)) from acyl-[acyl-carrier-protein] (acyl-ACP). This enzyme utilizes acyl-ACP as fatty acyl donor, but not acyl-CoA. In Klebsiella pneumoniae subsp. pneumoniae (strain ATCC 700721 / MGH 78578), this protein is Phosphate acyltransferase.